Reading from the N-terminus, the 212-residue chain is Prolactin (212 aa).

The first 24 residues, 1-24 (MAQRKTNGSKLFMMVLYMVAACSA), serve as a signal peptide directing secretion. Intrachain disulfides connect C70–C185 and C202–C212.

Belongs to the somatotropin/prolactin family. In terms of tissue distribution, pituitary gland.

The protein resides in the secreted. The sequence is that of Prolactin (prl) from Dicentrarchus labrax (European seabass).